We begin with the raw amino-acid sequence, 332 residues long: 4-hydroxy-3-methylbut-2-enyl diphosphate reductase (332 aa).

Cysteine 13 is a binding site for [4Fe-4S] cluster. (2E)-4-hydroxy-3-methylbut-2-enyl diphosphate-binding residues include histidine 41 and histidine 75. Residues histidine 41 and histidine 75 each coordinate dimethylallyl diphosphate. Histidine 41 and histidine 75 together coordinate isopentenyl diphosphate. Cysteine 97 lines the [4Fe-4S] cluster pocket. (2E)-4-hydroxy-3-methylbut-2-enyl diphosphate is bound at residue histidine 125. Histidine 125 is a dimethylallyl diphosphate binding site. Residue histidine 125 participates in isopentenyl diphosphate binding. The active-site Proton donor is the glutamate 127. Threonine 168 contributes to the (2E)-4-hydroxy-3-methylbut-2-enyl diphosphate binding site. Residue cysteine 229 coordinates [4Fe-4S] cluster. Residues serine 257, serine 258, asparagine 259, and serine 306 each contribute to the (2E)-4-hydroxy-3-methylbut-2-enyl diphosphate site. 4 residues coordinate dimethylallyl diphosphate: serine 257, serine 258, asparagine 259, and serine 306. Residues serine 257, serine 258, asparagine 259, and serine 306 each coordinate isopentenyl diphosphate.

This sequence belongs to the IspH family. It depends on [4Fe-4S] cluster as a cofactor.

It catalyses the reaction isopentenyl diphosphate + 2 oxidized [2Fe-2S]-[ferredoxin] + H2O = (2E)-4-hydroxy-3-methylbut-2-enyl diphosphate + 2 reduced [2Fe-2S]-[ferredoxin] + 2 H(+). The catalysed reaction is dimethylallyl diphosphate + 2 oxidized [2Fe-2S]-[ferredoxin] + H2O = (2E)-4-hydroxy-3-methylbut-2-enyl diphosphate + 2 reduced [2Fe-2S]-[ferredoxin] + 2 H(+). It functions in the pathway isoprenoid biosynthesis; dimethylallyl diphosphate biosynthesis; dimethylallyl diphosphate from (2E)-4-hydroxy-3-methylbutenyl diphosphate: step 1/1. It participates in isoprenoid biosynthesis; isopentenyl diphosphate biosynthesis via DXP pathway; isopentenyl diphosphate from 1-deoxy-D-xylulose 5-phosphate: step 6/6. Its function is as follows. Catalyzes the conversion of 1-hydroxy-2-methyl-2-(E)-butenyl 4-diphosphate (HMBPP) into a mixture of isopentenyl diphosphate (IPP) and dimethylallyl diphosphate (DMAPP). Acts in the terminal step of the DOXP/MEP pathway for isoprenoid precursor biosynthesis. This chain is 4-hydroxy-3-methylbut-2-enyl diphosphate reductase, found in Chlorobaculum tepidum (strain ATCC 49652 / DSM 12025 / NBRC 103806 / TLS) (Chlorobium tepidum).